The sequence spans 701 residues: Elongation factor G (701 aa).

The tr-type G domain occupies 8–290 (SLYRNIGISA…AVVELLPAPT (283 aa)). GTP is bound by residues 17 to 24 (AHIDAGKT), 88 to 92 (DTPGH), and 142 to 145 (NKMD).

It belongs to the TRAFAC class translation factor GTPase superfamily. Classic translation factor GTPase family. EF-G/EF-2 subfamily.

It localises to the cytoplasm. In terms of biological role, catalyzes the GTP-dependent ribosomal translocation step during translation elongation. During this step, the ribosome changes from the pre-translocational (PRE) to the post-translocational (POST) state as the newly formed A-site-bound peptidyl-tRNA and P-site-bound deacylated tRNA move to the P and E sites, respectively. Catalyzes the coordinated movement of the two tRNA molecules, the mRNA and conformational changes in the ribosome. This Neisseria meningitidis serogroup C (strain 053442) protein is Elongation factor G.